Reading from the N-terminus, the 2045-residue chain is MASAVSPANLPAVLLQPRWKRVVGWSGPVPRPRHGHRAVAIKELIVVFGGGNEGIVDELHVYNTATNQWFIPAVRGDIPPGCAAYGFVCDGTRLLVFGGMVEYGKYSNDLYELQASRWEWKRLKAKTPKNGPPPCPRLGHSFSLVGNKCYLFGGLANDSEDPKNNIPRYLNDLYILELRPGSGVVAWDIPITYGVLPPPRESHTAVVYTEKDNKKSKLVIYGGMSGCRLGDLWTLDIETLTWNKPSLSGVAPLPRSLHSATTIGNKMYVFGGWVPLVMDDVKVATHEKEWKCTNTLACLNLDTMAWETILMDTLEDNIPRARAGHCAVAINTRLYIWSGRDGYRKAWNNQVCCKDLWYLETEKPPPPARVQLVRANTNSLEVSWGAVATADSYLLQLQKYDIPATAATATSPTPNPVPSVPANPPKSPAPAAAAPAVQPLTQVGITLVPQAATAPPSTTTIQVLPTVPGSSISVPTAARTQGVPAVLKVTGPQATTGTPLVTMRPASQAGKAPVTVTSLPASVRMVVPTQSAQGTVIGSNPQMSGMAALAAAAAATQKIPPSSAPTVLSVPAGTTIVKTVAVTPGTTTLPATVKVASSPVMVSNPATRMLKTAAAQVGTSVSSAANTSTRPIITVHKSGTVTVAQQAQVVTTVVGGVTKTITLVKSPISVPGGSALISNLGKVMSVVQTKPVQTSAVTGQASTGPVTQIIQTKGPLPAGTILKLVTSADGKPTTIITTTQASGAGTKPTILGISSVSPSTTKPGTTTIIKTIPMSAIITQAGATGVTSSPGIKSPITIITTKVMTSGTGAPAKIITAVPKIATGHGQQGVTQVVLKGAPGQPGTILRTVPMGGVRLVTPVTVSAVKPAVTTLVVKGTTGVTTLGTVTGTVSTSLAGAGAHSTSASLATPITTLGTIATLSSQVINPTAITVSAAQTTLTAAGGLTTPTITMQPVSQPTQVTLITAPSGVEAQPVHDLPVSILASPTTEQPTATVTIADSGQGDVQPGTVTLVCSNPPCETHETGTTNTATTTVVANLGGHPQPTQVQFVCDRQETAASLVTSAVGQQNGNVVRVCSNPPCETHETGTTNTATTATSNMAGQHGCSNPPCETHETGTTSTATTAMSSMGTGQQRDTRRTTNTPTVVRITVAPGALERVQGTVKPQCQTQQTNMTTTTMTVQATGAPCSAGPLLRPSVALESGSHSPAFVQLALPSVRVGLSGPSSKDMPTGRQPETYHTYTTNTPTTTRSIMVAGELGAARVVPTSTYESLQASSPSSTMTMTALEALLCPSATVTQVCSNPPCETHETGTTNTATTSNAGSAQRVCSNPPCETHETGTTHTATTATSNGGAGQPEGGQQPASGHPCETHQTTSTGTTMSVSVGTLIPDATSSHGTLESGLEVVAVPTVTSQAGSTLLASFPTQRVCSNPPCETHETGTTHTATTVTSNMSSNQDPPPAASDQGEVASTQGDSTNITSASAITTSVSSTLPRAVTTVTQSTPVPGPSVPPPEELQVSPGPRQQLPPRQLLQSASTPLMGESTEVLSASQTPELQAAVDLSSTGDPSSGQEPTTSAVVATVVVQPPPPTQSEVDQLSLPQELMAEAQAGTTTLMVTGLTPEELAVTAAAEAAAQAAATEEAQALAIQAVLQAAQQAVMGTGEPMDTSEAAAAVTQAELGHLSAEGQEGQATTIPIVLTQQELAALVQQQQQLQEAQAQAQQQHHLPTEALAPADSLNDPSIESNCLNELASAVPSTVALLPSTATESLAPSNTFVAPQPVVASPAKMQAAATLTEVANGIESLGVKPDLPPPPSKAPVKKENQWFDVGVIKGTSVMVTHYFLPPDDAVQSDDDSGTVPDYNQLKKQELQPGTAYKFRVAGINACGRGPFSEISAFKTCLPGFPGAPCAIKISKSPDGAHLTWEPPSVTSGKIIEYSVYLAIQSSQASGEPKSSTPAQLAFMRVYCGPSPSCLVQSSSLSNAHIDYTTKPAIIFRIAARNEKGYGPATQVRWLQETSKDSSGTKPASKRPMSSPEMKSAPKKSKADGQ.

Residue Ala2 is modified to N-acetylalanine. Ser6 bears the Phosphoserine mark. Kelch repeat units follow at residues 44–89 (LIVV…GFVC), 93–140 (RLLV…RLGH), 148–194 (KCYL…ITYG), 217–265 (KLVI…TIGN), and 266–313 (KMYV…LMDT). Residues Lys105, Lys163, and Lys244 each participate in a glycyl lysine isopeptide (Lys-Gly) (interchain with G-Cter in ubiquitin) cross-link. Lys282 is covalently cross-linked (Glycyl lysine isopeptide (Lys-Gly) (interchain with G-Cter in SUMO2)). Lys288 is modified (N6-acetyllysine). Lys363 participates in a covalent cross-link: Glycyl lysine isopeptide (Lys-Gly) (interchain with G-Cter in ubiquitin). The Fibronectin type-III 1 domain maps to 366 to 457 (PPARVQLVRA…VPQAATAPPS (92 aa)). The segment at 407–434 (ATATSPTPNPVPSVPANPPKSPAPAAAA) is disordered. Position 411 is a phosphoserine (Ser411). Residues 413–428 (TPNPVPSVPANPPKSP) are compositionally biased toward pro residues. A required for interaction with OGT region spans residues 500–550 (LVTMRPASQAGKAPVTVTSLPASVRMVVPTQSAQGTVIGSNPQMSGMAALA). Arg504 and Arg524 each carry omega-N-methylarginine. A phosphoserine mark is found at Ser598, Ser666, and Ser669. Residues 610-722 (LKTAAAQVGT…KGPLPAGTIL (113 aa)) are interaction with SIN3A. Residues 750 to 902 (ILGISSVSPS…SLAGAGAHST (153 aa)) are interaction with ZBTB17. Lys813 is modified (N6-acetyllysine). Residues 813–912 (KIITAVPKIA…SASLATPITT (100 aa)) form an interaction with GABP2 region. HCF repeat repeat units follow at residues 1010–1035 (TLVC…TVVA), 1072–1097 (VRVC…ATSN), and 1101–1126 (QHGC…AMSS). One copy of the HCF repeat 4; degenerate repeat lies at 1157-1182 (VQGTVKPQCQTQQTNMTTTTMTVQAT). At Ser1204 the chain carries Phosphoserine. Arg1216 carries the post-translational modification Asymmetric dimethylarginine. Disordered regions lie at residues 1219-1242 (LSGP…YTTN), 1302-1375 (PCET…TSTG), 1444-1475 (TVTS…STNI), and 1494-1525 (TTVT…QLPP). Ser1223 is modified (phosphoserine). HCF repeat repeat units follow at residues 1295 to 1320 (TQVC…SNAG) and 1323 to 1348 (QRVC…ATSN). The segment covering 1308–1321 (TGTTNTATTSNAGS) has biased composition (low complexity). The HCF repeat 7; degenerate repeat unit spans residues 1358 to 1383 (QQPASGHPCETHQTTSTGTTMSVSVG). The HCF repeat 8 repeat unit spans residues 1423-1448 (QRVCSNPPCETHETGTTHTATTVTSN). Thr1500 is modified (phosphothreonine). Residues 1502–1511 (VPGPSVPPPE) show a composition bias toward pro residues. A phosphoserine mark is found at Ser1506, Ser1516, and Ser1781. 2 consecutive Fibronectin type-III domains span residues 1808 to 1898 (PPPP…TCLP) and 1900 to 2016 (FPGA…TSKD). Residues Lys1817 and Lys1818 each participate in a glycyl lysine isopeptide (Lys-Gly) (interchain with G-Cter in ubiquitin) cross-link. Ser1848 carries the phosphoserine modification. The tract at residues 2004 to 2045 (ATQVRWLQETSKDSSGTKPASKRPMSSPEMKSAPKKSKADGQ) is disordered. Lys2015 is modified (N6-acetyllysine). Lys2034 participates in a covalent cross-link: Glycyl lysine isopeptide (Lys-Gly) (interchain with G-Cter in SUMO2).

Composed predominantly of six polypeptides ranging from 110 to 150 kDa and a minor 300 kDa polypeptide. The majority of N- and C-terminal cleavage products remain tightly, albeit non-covalently, associated. Interacts with POU2F1, CREB3, ZBTB17, EGR2, E2F4, CREBZF, SP1, GABP2, Sin3 HDAC complex (SIN3A, HDAC1, HDAC2, SUDS3), SAP30, SIN3B and FHL2. Component of a MLL1 complex, composed of at least the core components KMT2A/MLL1, ASH2L, HCFC1, WDR5 and RBBP5, as well as the facultative components BACC1, CHD8, DPY30, E2F6, HCFC2, HSP70, INO80C, KANSL1, LAS1L, MAX, MCRS1, MEN1, MGA, KAT8, PELP1, PHF20, PRP31, RING2, RUVBL1, RUVBL2, SENP3, TAF1, TAF4, TAF6, TAF7, TAF9 and TEX10. Component of a THAP1/THAP3-HCFC1-OGT complex that is required for the regulation of the transcriptional activity of RRM1. Interacts directly with THAP3 (via its HBM). Interacts (via the Kelch-repeat domain) with THAP1 (via the HBM); the interaction recruits HCHC1 to the RRM1. Interacts with THAP7 and THAP11 (via the HMB). Interacts directly with OGT; the interaction, which requires the HCFC1 cleavage site domain, glycosylates and promotes the proteolytic processing of HCFC1 and retains OGT in the nucleus. Component of the SET1 complex, at least composed of the catalytic subunit (SETD1A or SETD1B), WDR5, WDR82, RBBP5, ASH2L, CXXC1, HCFC1 and DPY30. Component of the NSL complex at least composed of MOF/KAT8, KANSL1, KANSL2, KANSL3, MCRS1, PHF20, OGT1/OGT, WDR5 and HCFC1. Component of a complex at least composed of ZNF335, HCFC1, CCAR2, EMSY, MKI67, RBBP5, ASH2L and WDR5; the complex is formed as a result of interactions between components of a nuclear receptor-mediated transcription complex and a histone methylation complex. Within the complex interacts with ZNF335. Interacts with TET2 and TET3. Interacts with HCFC1R1. Interacts with THAP11. Interacts (via Kelch domain) with KMT2E (via HBM motif). Interacts with E2F1. Accessory scaffold component of the polycomb repressive deubiquitinase (PR-DUB) complex, at least composed of BAP1, one of ASXL1, ASXL2 or (probably) ASXL3 and one of MBD5 or MBD6; the PR-DUB core associates with a number of accessory proteins, including FOXK1, FOXK2, KDM1B, HCFC1, YY1 and OGT. Interacts with YY1 (via Gly-rich region); the interaction is direct. Interacts with BAP1 (via HBM-like motif). Proteolytically cleaved at one or several PPCE--THET sites within the HCF repeats. Further cleavage of the primary N- and C-terminal chains results in a 'trimming' and accumulation of the smaller chains. Cleavage is promoted by O-glycosylation. Post-translationally, O-glycosylated. GlcNAcylation by OGT promotes proteolytic processing. In terms of processing, ubiquitinated. Lys-1817 and Lys-1818 are ubiquitinated both via 'Lys-48'- and 'Lys-63'-linked polyubiquitin chains. BAP1 mediated deubiquitination of 'Lys-48'-linked polyubiquitin chains; deubiquitination by BAP1 does not seem to stabilize the protein. Expressed in liver, pituitary gland, skeletal muscle, kidney, eye and brain (at protein level). Also observed at low level in heart, spleen and lung.

The protein resides in the nucleus. Its subcellular location is the cytoplasm. Its function is as follows. Transcriptional coregulator. Serves as a scaffold protein, bridging interactions between transcription factors, including THAP11 and ZNF143, and transcriptional coregulators. Involved in control of the cell cycle. Also antagonizes transactivation by ZBTB17 and GABP2; represses ZBTB17 activation of the p15(INK4b) promoter and inhibits its ability to recruit p300. Coactivator for EGR2 and GABP2. Tethers the chromatin modifying Set1/Ash2 histone H3 'Lys-4' methyltransferase (H3K4me) and Sin3 histone deacetylase (HDAC) complexes (involved in the activation and repression of transcription respectively) together. As part of the NSL complex it may be involved in acetylation of nucleosomal histone H4 on several lysine residues. Recruits KMT2E to E2F1 responsive promoters promoting transcriptional activation and thereby facilitates G1 to S phase transition. Modulates expression of homeobox protein PDX1, perhaps acting in concert with transcription factor E2F1, thereby regulating pancreatic beta-cell growth and glucose-stimulated insulin secretion. May negatively modulate transcriptional activity of FOXO3. This Mus musculus (Mouse) protein is Host cell factor 1.